The following is a 225-amino-acid chain: Phosphoribosylformylglycinamidine synthase subunit PurQ (225 aa).

The Glutamine amidotransferase type-1 domain maps to 6–225 (FGVVVFPGSN…WQSILRSFAA (220 aa)). Cys-89 acts as the Nucleophile in catalysis. Active-site residues include His-198 and Glu-200.

As to quaternary structure, part of the FGAM synthase complex composed of 1 PurL, 1 PurQ and 2 PurS subunits.

It is found in the cytoplasm. The enzyme catalyses N(2)-formyl-N(1)-(5-phospho-beta-D-ribosyl)glycinamide + L-glutamine + ATP + H2O = 2-formamido-N(1)-(5-O-phospho-beta-D-ribosyl)acetamidine + L-glutamate + ADP + phosphate + H(+). It carries out the reaction L-glutamine + H2O = L-glutamate + NH4(+). It participates in purine metabolism; IMP biosynthesis via de novo pathway; 5-amino-1-(5-phospho-D-ribosyl)imidazole from N(2)-formyl-N(1)-(5-phospho-D-ribosyl)glycinamide: step 1/2. Its function is as follows. Part of the phosphoribosylformylglycinamidine synthase complex involved in the purines biosynthetic pathway. Catalyzes the ATP-dependent conversion of formylglycinamide ribonucleotide (FGAR) and glutamine to yield formylglycinamidine ribonucleotide (FGAM) and glutamate. The FGAM synthase complex is composed of three subunits. PurQ produces an ammonia molecule by converting glutamine to glutamate. PurL transfers the ammonia molecule to FGAR to form FGAM in an ATP-dependent manner. PurS interacts with PurQ and PurL and is thought to assist in the transfer of the ammonia molecule from PurQ to PurL. The chain is Phosphoribosylformylglycinamidine synthase subunit PurQ from Synechococcus sp. (strain JA-2-3B'a(2-13)) (Cyanobacteria bacterium Yellowstone B-Prime).